The following is a 209-amino-acid chain: MVNFVSVGLFRCLPVPCPEDLLVEELVDGLLSLEEELKDKEEEETVLDGLLSLEEESRGRLRRGPPGGKAPPRGETHRDRQRRAEEKRKRKKEREKEEEKQIAEYLKRKEEEKARRRKRAEEKAADFARRKQEEQERRERKWRQGAEKAKQHSARKEKMQELGVDGYTRQLEGEVESLEAERRRLLQEKEDLMGEVNYWQGRLEAMWLQ.

Positions 41-165 (EEEETVLDGL…KEKMQELGVD (125 aa)) are disordered. Composition is skewed to basic and acidic residues over residues 72 to 87 (PRGE…AEEK) and 94 to 160 (REKE…EKMQ). Short sequence motifs (nuclear localization signal) lie at residues 87–92 (KRKRKK), 116–120 (RRKRA), and 137–141 (RRERK).

It belongs to the HTLV-1 HBZ protein family. In terms of assembly, interacts with host ATF4; this interaction inhibits viral RNA transcriptional activation by preventing ATF4 binding to Tax-responsive elements. Interacts with host CREB1; this interaction inhibits host CREB1 transcriptional activity. Interacts with host JUN, JUNB and JUND. Interacts with host EP300 and CREBBP; these interactions inhibit the association of the coactivators with the viral promoter. Interacts with host UBR5; this interaction regulates HBZ protein stability. Interacts with XRCC5 and XRCC6. Interacts with IRF7 and IKBKE; this interaction modulates host interferon signaling. In terms of processing, ubiquitinated by host E3 ligase UBR5 leading to HBZ degradation.

It localises to the host nucleus. Enhances viral infectivity and persistence, and facilitates proliferation of HTLV-1-infected lymphocytes. Mechanistically, inhibits Tax-mediated viral replication and NF-kappa-B activation. Plays a role in allowing infected T-cells to escape the cytotoxic T-lymphocyte response by maintaining low levels of viral protein production. Also inhibits host EP300 histone acetyltransferase (HAT) activity, reducing levels of acetylated histone H3 at 'Lys-18' (H3K18ac) in infected cells. Contributes to the accumulation of chromosomal abnormalities by inhibiting double-stranded DNA breaks (DSB) repair through the NHEJ pathway. Participates in the modulation of host immune response at multiple levels contributing to abnormal interferon signaling and viral pathogenesis. This is HTLV-1 basic zipper factor (HBZ) from Human T-cell leukemia virus 1 (isolate Caribbea HS-35 subtype A) (HTLV-1).